Consider the following 799-residue polypeptide: Pentatricopeptide repeat-containing protein At2g26790, mitochondrial (799 aa).

Residues 1 to 27 constitute a mitochondrion transit peptide; sequence MRFSPTFFLLSQLRLTRRRAATSSRFY. PPR repeat units lie at residues 145–179, 180–214, 215–250, 251–278, 282–316, 317–351, 352–386, 387–421, 422–456, 457–491, 492–522, 523–553, 555–589, 590–624, 625–659, 660–695, 708–742, and 743–777; these read LIRV…DCVV, DIKA…GLCA, NEYT…GYKT, FING…KYLA, LRAV…GFGL, DVYA…GLKV, NCVI…NIFL, DRVC…GIVP, DVIN…GMSP, DLIT…GPKP, NAVT…LEQK, CPEN…LEYP, RKSV…RVEP, GRSM…GLIP, DLFT…GIKP, DVVT…KASE, DVVC…GLEP, and DMVA…YNIP.

Belongs to the PPR family. P subfamily.

The protein localises to the mitochondrion. This Arabidopsis thaliana (Mouse-ear cress) protein is Pentatricopeptide repeat-containing protein At2g26790, mitochondrial.